We begin with the raw amino-acid sequence, 38 residues long: Photosystem II reaction center protein M (38 aa).

The helical transmembrane segment at 7-27 (GFVASILFVLVPTVFLLILYI) threads the bilayer.

Belongs to the PsbM family. PSII is composed of 1 copy each of membrane proteins PsbA, PsbB, PsbC, PsbD, PsbE, PsbF, PsbH, PsbI, PsbJ, PsbK, PsbL, PsbM, PsbT, PsbX, PsbY, PsbZ, Psb30/Ycf12, peripheral proteins PsbO, CyanoQ (PsbQ), PsbU, PsbV and a large number of cofactors. It forms dimeric complexes.

Its subcellular location is the cellular thylakoid membrane. Functionally, one of the components of the core complex of photosystem II (PSII). PSII is a light-driven water:plastoquinone oxidoreductase that uses light energy to abstract electrons from H(2)O, generating O(2) and a proton gradient subsequently used for ATP formation. It consists of a core antenna complex that captures photons, and an electron transfer chain that converts photonic excitation into a charge separation. This subunit is found at the monomer-monomer interface. This is Photosystem II reaction center protein M from Nostoc punctiforme (strain ATCC 29133 / PCC 73102).